An 845-amino-acid chain; its full sequence is BLOC-2 complex member HPS5 homolog (845 aa).

Residues 239–268 (PTEEDLEDAKSMEGSDDNDNDQRSSPSGVK) are disordered.

This sequence belongs to the HPS5 family.

Its function is as follows. Has a role in the biogenesis of eye pigment granules. Eye pigment granules are specialized forms of late endosomes or lysosomes. Biogenesis of pigment granules in the eye requires molecular components required for protein delivery to lysosomes. This is BLOC-2 complex member HPS5 homolog from Aedes aegypti (Yellowfever mosquito).